Consider the following 502-residue polypeptide: Mannitol dehydrogenase 2 (502 aa).

It belongs to the mannitol dehydrogenase family.

It catalyses the reaction D-mannitol + NAD(+) = D-fructose + NADH + H(+). Catalyzes the NAD(H)-dependent interconversion of D-fructose and D-mannitol in the mannitol metabolic pathway. This is Mannitol dehydrogenase 2 from Saccharomyces cerevisiae (strain ATCC 204508 / S288c) (Baker's yeast).